Reading from the N-terminus, the 197-residue chain is Large ribosomal subunit protein mL58 (197 aa).

The transit peptide at 1–20 directs the protein to the mitochondrion; the sequence is MLFTIKPSFLKPVGFIQTRN.

The protein belongs to the mitochondrion-specific ribosomal protein mL58 family. In terms of assembly, component of the mitochondrial large ribosomal subunit (mt-LSU). Mature yeast 74S mitochondrial ribosomes consist of a small (37S) and a large (54S) subunit. The 37S small subunit contains a 15S ribosomal RNA (15S mt-rRNA) and at least 32 different proteins. The 54S large subunit contains a 21S rRNA (21S mt-rRNA) and at least 45 different proteins.

The protein localises to the mitochondrion. Its function is as follows. Component of the mitochondrial ribosome (mitoribosome), a dedicated translation machinery responsible for the synthesis of mitochondrial genome-encoded proteins, including at least some of the essential transmembrane subunits of the mitochondrial respiratory chain. The mitoribosomes are attached to the mitochondrial inner membrane and translation products are cotranslationally integrated into the membrane. In Schizosaccharomyces pombe (strain 972 / ATCC 24843) (Fission yeast), this protein is Large ribosomal subunit protein mL58 (mrpl20).